The chain runs to 157 residues: Ribosome maturation factor RimP (157 aa).

It belongs to the RimP family.

Its subcellular location is the cytoplasm. Its function is as follows. Required for maturation of 30S ribosomal subunits. This chain is Ribosome maturation factor RimP, found in Bacillus pumilus (strain SAFR-032).